The primary structure comprises 147 residues: MVHFTAEEKAIITSLWAKVNVEETGGEALGRLLVVYPWTQRFFDNFGNLSSASAIMGNPKVKAHGKKVLSSLGEAVTHMDDLKDAFAHLSELHCDRLHVDPENFRLLGNVLVIVLAHHFGREFTPQVQAAWKKLMSAVAIALGHKYH.

The Globin domain maps to 3–147; that stretch reads HFTAEEKAII…VAIALGHKYH (145 aa). The heme b site is built by His-64 and His-93.

Belongs to the globin family. As to quaternary structure, heterotetramer of two alpha chains and two gamma chains in fetal hemoglobin (Hb F). As to expression, red blood cells.

Functionally, gamma chains make up the fetal hemoglobin F, in combination with alpha chains. The sequence is that of Hemoglobin subunit gamma (HBG) from Cephalopachus bancanus (Western tarsier).